A 303-amino-acid polypeptide reads, in one-letter code: Cytidine deaminase (303 aa).

2 CMP/dCMP-type deaminase domains span residues 57-172 (TDKE…YLPD) and 196-303 (ITED…IQVS). Position 98–100 (98–100 (NQE)) interacts with substrate. His-111 contributes to the Zn(2+) binding site. Glu-113 (proton donor) is an active-site residue. 2 residues coordinate Zn(2+): Cys-138 and Cys-141.

It belongs to the cytidine and deoxycytidylate deaminase family. As to quaternary structure, homodimer. Requires Zn(2+) as cofactor.

The enzyme catalyses cytidine + H2O + H(+) = uridine + NH4(+). It carries out the reaction 2'-deoxycytidine + H2O + H(+) = 2'-deoxyuridine + NH4(+). Its function is as follows. This enzyme scavenges exogenous and endogenous cytidine and 2'-deoxycytidine for UMP synthesis. The chain is Cytidine deaminase from Histophilus somni (strain 2336) (Haemophilus somnus).